The sequence spans 1703 residues: Mediator of RNA polymerase II transcription subunit 14 (1703 aa).

Residues 755 to 766 (LSQTADLATSSA) are compositionally biased toward polar residues. The tract at residues 755-781 (LSQTADLATSSAGPLLRKDQKPRKRSA) is disordered.

Belongs to the Mediator complex subunit 14 family. Component of the Mediator complex. Interacts with CDKE-1, HDA19 and LUG. Interacts with PTAC12/HMR/PAP5 and PIF4. Expressed in roots, stems, developing embryos, young leaf primordia, shoot apical meristems, inflorescence meristems, tapetum in anthers, ovules and floral organ primordia, but not in mature organs.

It localises to the nucleus. Its function is as follows. Component of the Mediator complex, a coactivator involved in the regulated transcription of nearly all RNA polymerase II-dependent genes. Mediator functions as a bridge to convey information from gene-specific regulatory proteins to the basal RNA polymerase II transcription machinery. The Mediator complex, having a compact conformation in its free form, is recruited to promoters by direct interactions with regulatory proteins and serves for the assembly of a functional pre-initiation complex with RNA polymerase II and the general transcription factors. Binds to G-box (5'-CACGTG-3')-containing regions of target genes promoters (e.g. IAA29 and IAA19). Involved in defining the duration of cell proliferation. Element of a PIF4/HMR/MED14-dependent thermoresponsive process; required for thermomorphogenetic hypocotyl growth in response to daytime warm temperature elicitation by associating to the promoters of thermoresponsive growth-relevant genes (e.g. mainly involved in biosynthesis and signaling of the phytohormone auxin); this also process implies PIF4 and its transcriptional coactivator PTAC12/HMR/PAP5 to promote the expression of target genes. This is Mediator of RNA polymerase II transcription subunit 14 from Arabidopsis thaliana (Mouse-ear cress).